Here is a 440-residue protein sequence, read N- to C-terminus: MMAVEEEEVKEVLQKLQELVDQLYSFRECYFETHSVDDAGRKQQDVREEMEKTLQQMEEVVGSVQGNAQVLMLTGKALNVTPDYSPKAEELLSKAVKLEPKLVEAWNQLGEVYWKKGDVAAAHTCFSGALTHCKNKVSLQNLSMVLRQLRTDSGDEHSRHVMDSVRQAKLAVQMDILDGRSWYILGNAYLSLYFNTGQNPKISQQALSAYAQAEKVDRTASSNPDLHLNRATLHKYEENYGEALEGFSRAAALDPAWPEPWQREQQLLDFLTRLTSFLESKGKVKTKKLQSMLGNLRPAHLGPCGDGRYQSASGQKVTLERKPLNALQPGVNSGAVVLGKVVFSLTTEEKVPFTFGLVDSDGPCYAVMVYNMVQSWGVLIGDSVAIPEPNLRLHRIQHKGKDYSFSSVRVETPLLLVVNGKPQGSSSQAAATVASRPQCE.

5 TPR repeats span residues 7–61, 68–98, 103–130, 136–174, and 179–216; these read EEVK…EEVV, AQVL…AVKL, VEAW…SGAL, KVSL…AVQM, and GRSW…AEKV. The Nuclear export signal signature appears at 13-24; sequence LQKLQELVDQLY. Ser-203 carries the phosphoserine; by ATM modification. Ser-221 is subject to Phosphoserine; by CHEK2. The TPR 6 repeat unit spans residues 224 to 253; the sequence is PDLHLNRATLHKYEENYGEALEGFSRAAAL. The interval 285-287 is mediates interaction with 28S rRNA of ribosome-coding tubulin; the sequence is KTK.

Interacts with JMY and p300/EP300; the interaction occurs in the nucleus and augments the association between JMY and p300/EP300 in response to DNA damage. Interacts with PRMT5; the interaction is DNA damage-dependent and promotes PRMT5 interaction with p53/TP53 and subsequent methylation. Forms a complex with HSF1 and p300/EP300; these interactions augment chromatin-bound HSF1 and p300/EP300 histone acetyltransferase activity, resulting in enhanced heat-shock-responsive transcription. Interacts with JMY; the interaction occurs in the cytoplasm and results in the inhibition of JYM's nucleation activity. Interacts with ribosome-coding tubulin (via 60S subunit 28S rRNA and protein uL24/RPL26) and the N-terminal of nascent tubulin polypeptide (via alpha-tubulin MREC motif and beta-tubulin MREI motif); these interactions result in tubulin mRNA-targeted degradation. Interacts with ATP5F1B; the interaction occurs in the mitochondria and results in ATP production decrease. Interacts with p53/TP53; the interaction occurs in the mitochondria and results in increased apoptosis. In terms of processing, phosphorylation by ATM kinase induces nuclear accumulation while interfering with nuclear export, and phosphorylation by CHEK2 kinase enhances nuclear stability.

The protein localises to the nucleus. It localises to the cytoplasm. It is found in the cytoplasmic vesicle. The protein resides in the mitochondrion matrix. In terms of biological role, cofactor involved in the regulation of various cellular mechanisms such as actin regulation, autophagy, chromatin regulation and DNA repair. In physiological conditions, interacts with cofactor JMY in the cytoplasm which prevents JMY's actin nucleation activity and ability to activate the Arp2/3 complex. Acts as a negative regulator of nutrient stress-induced autophagy by inhibiting JMY's interaction with MAP1LC3B, thereby preventing autophagosome formation. Involves in tubulin autoregulation by promoting its degradation in response to excess soluble tubulin. To do so, associates with the active ribosome near the ribosome exit tunnel and with nascent tubulin polypeptides early during their translation, triggering tubulin mRNA-targeted degradation. Following DNA damage, phosphorylated by DNA damage responsive protein kinases ATM and CHEK2, leading to its nuclear accumulation and stability. Nuclear TTC5/STRAP promotes the assembly of a stress-responsive p53/TP53 coactivator complex, which includes the coactivators JMY and p300, thereby increasing p53/TP53-dependent transcription and apoptosis. Also recruits arginine methyltransferase PRMT5 to p53/TP53 when DNA is damaged, allowing PRMT5 to methylate p53/TP53. In DNA stress conditions, also prevents p53/TP53 degradation by E3 ubiquitin ligase MDM2. Upon heat-shock stress, forms a chromatin-associated complex with heat-shock factor 1 HSF1 and p300/EP300 to stimulate heat-shock-responsive transcription, thereby increasing cell survival. Mitochondrial TTC5/STRAP interacts with ATP synthase subunit beta ATP5F1B which decreased ATP synthase activity and lowers mitochondrial ATP production, thereby regulating cellular respiration and mitochondrial-dependent apoptosis. Mitochondrial TTC5/STRAP also regulates p53/TP53-mediated apoptosis. The protein is Tetratricopeptide repeat protein 5 (TTC5) of Bos taurus (Bovine).